The chain runs to 46 residues: Light-harvesting protein B800/850/890 alpha-1 chain (46 aa).

Topologically, residues 1–12 are cytoplasmic; the sequence is MWRLWKLYDPRR. A helical transmembrane segment spans residues 13-33; sequence VLIGIFSWLAVLALVIHFILL. Residue His-29 coordinates a bacteriochlorophyll. The Periplasmic segment spans residues 34–46; it reads STDRFNWVGGAAN.

The protein belongs to the antenna complex alpha subunit family. The core complex is formed by different alpha and beta chains, binding bacteriochlorophyll molecules, and arranged most probably in tetrameric structures disposed around the reaction center. The non-pigmented gamma chains may constitute additional components.

It is found in the cell inner membrane. Antenna complexes are light-harvesting systems, which transfer the excitation energy to the reaction centers. The polypeptide is Light-harvesting protein B800/850/890 alpha-1 chain (Halorhodospira halophila (strain DSM 244 / SL1) (Ectothiorhodospira halophila (strain DSM 244 / SL1))).